A 132-amino-acid polypeptide reads, in one-letter code: Actin-related protein 2/3 complex subunit 5A (132 aa).

Ala-2 is subject to N-acetylalanine.

Belongs to the ARPC5 family. Component of the Arp2/3 complex composed of ARP2, ARP3, ARPC1/p41-ARC, ARPC2/p34-ARC, ARPC3/p21-ARC, ARPC4/p20-ARC and ARPC5/p16-ARC. Expressed at low levels in all tissues with a relatively highest expression in inflorescences.

It localises to the cytoplasm. The protein resides in the cytoskeleton. The protein localises to the cell projection. Functions as a component of the Arp2/3 complex which is involved in regulation of actin polymerization and together with an activating nucleation-promoting factor (NPF) mediates the formation of branched actin networks. Arp2/3 complex plays a critical role in the control of cell morphogenesis via the modulation of cell polarity development. The sequence is that of Actin-related protein 2/3 complex subunit 5A (ARPC5A) from Arabidopsis thaliana (Mouse-ear cress).